The primary structure comprises 221 residues: Pre-rRNA-processing protein SRD1 (221 aa).

Positions 101-110 (SKNRVTSACN) are enriched in polar residues. Disordered stretches follow at residues 101–121 (SKNR…QEAN) and 137–161 (ASIT…TILP). Residues 142-155 (KYSKKTTSRPKREK) show a composition bias toward basic residues. A GATA-type zinc finger spans residues 168–193 (CSKCKDTWTIQWRSGPDQNRELCSPC). Residues 201 to 221 (LKKENEKKRQAADKRIDRNNP) form a disordered region. Over residues 203 to 221 (KENEKKRQAADKRIDRNNP) the composition is skewed to basic and acidic residues.

Its subcellular location is the cytoplasm. It is found in the nucleus. Functionally, plays a direct or indirect role in pre-rRNA processing. This chain is Pre-rRNA-processing protein SRD1 (SRD1), found in Saccharomyces cerevisiae (strain ATCC 204508 / S288c) (Baker's yeast).